A 278-amino-acid chain; its full sequence is Diaminopimelate epimerase (278 aa).

Asparagine 13, glutamine 49, and asparagine 68 together coordinate substrate. The Proton donor role is filled by cysteine 77. Substrate-binding positions include 78-79 (GN), asparagine 161, asparagine 194, and 212-213 (ER). The active-site Proton acceptor is cysteine 221. Position 222–223 (222–223 (GT)) interacts with substrate.

It belongs to the diaminopimelate epimerase family. Homodimer.

It localises to the cytoplasm. The catalysed reaction is (2S,6S)-2,6-diaminopimelate = meso-2,6-diaminopimelate. It participates in amino-acid biosynthesis; L-lysine biosynthesis via DAP pathway; DL-2,6-diaminopimelate from LL-2,6-diaminopimelate: step 1/1. Functionally, catalyzes the stereoinversion of LL-2,6-diaminopimelate (L,L-DAP) to meso-diaminopimelate (meso-DAP), a precursor of L-lysine and an essential component of the bacterial peptidoglycan. The chain is Diaminopimelate epimerase from Nitrosomonas eutropha (strain DSM 101675 / C91 / Nm57).